We begin with the raw amino-acid sequence, 132 residues long: Interleukin-13 (132 aa).

The first 18 residues, 1–18, serve as a signal peptide directing secretion; the sequence is MALLLTTVIALTCLGGFA. Residues N38, N49, N57, and N72 are each glycosylated (N-linked (GlcNAc...) asparagine). Disulfide bonds link C48/C76 and C64/C90.

It belongs to the IL-4/IL-13 family. As to quaternary structure, interacts with IL13RA2.

It localises to the secreted. Its function is as follows. Cytokine that plays important roles in allergic inflammation and immune response to parasite infection. Synergizes with IL2 in regulating interferon-gamma synthesis. Stimulates B-cell proliferation, and activation of eosinophils, basophils, and mast cells. Plays an important role in controlling IL33 activity by modulating the production of transmembrane and soluble forms of interleukin-1 receptor-like 1/IL1RL1. Displays the capacity to antagonize Th1-driven proinflammatory immune response and downregulates synthesis of many proinflammatory cytokines including IL1, IL6, IL10, IL12 and TNF-alpha through a mechanism that partially involves suppression of NF-kappa-B. Also functions on nonhematopoietic cells, including endothelial cells where it induces vascular cell adhesion protein 1/VCAM1, which is important in the recruitment of eosinophils. Exerts its biological effects through its receptors which comprises the IL4R chain and the IL13RA1 chain, to activate JAK1 and TYK2, leading to the activation of STAT6. Aside from IL13RA1, another receptor IL13RA2 acts as a high affinity decoy for IL13 and mediates internalization and depletion of extracellular IL13. This is Interleukin-13 (IL13) from Pan troglodytes (Chimpanzee).